The primary structure comprises 455 residues: MLNSAMSVVILAAGKGTRMYSDIPKVLHTLAGKAMVQHVIDAANELGASQVHLVYGHGGDLLKQTLKNDNLNWVLQAEQLGTGHAMQQAAPFFGDDENILMLYGDVPLISVETLQRLRDAKPQGGIGLLTVKLDDPSGYGRITRVNGKVTGIVEHKDATDEQRQIKEINTGILIANGADMKRWLSKLTNNNAQGEYYITDIIALAYQEGREIAAVHPARISETEGVNNRLQLSRLERIYQAEQAEKLLLAGVMLRDPARFDLRGNLAHGRDVEIDTNVIIEGNVTLGHRVKIGTGCIIKNSVIGDDCEISPYSVVEDARLDPACTIGPFARLRPGAELLAGAHVGNFVEMKKARLGKGSKAGHLTYLGDADIGDNVNIGAGTITCNYDGANKFKTIIGDDVFVGSDTQLVAPVTVGKGATIAAGTTVTRNVADNELVLSRVPQVHKQGWQRPVKK.

Positions 1 to 229 are pyrophosphorylase; the sequence is MLNSAMSVVI…ISETEGVNNR (229 aa). Residues 11-14, Lys25, Gln76, 81-82, 103-105, Gly140, Glu154, Asn169, and Asn227 each bind UDP-N-acetyl-alpha-D-glucosamine; these read LAAG, GT, and YGD. Residue Asp105 participates in Mg(2+) binding. Asn227 contributes to the Mg(2+) binding site. Residues 230-250 form a linker region; the sequence is LQLSRLERIYQAEQAEKLLLA. The interval 251-455 is N-acetyltransferase; that stretch reads GVMLRDPARF…KQGWQRPVKK (205 aa). Residues Arg333 and Lys351 each coordinate UDP-N-acetyl-alpha-D-glucosamine. The active-site Proton acceptor is His363. Tyr366 and Asn377 together coordinate UDP-N-acetyl-alpha-D-glucosamine. Residues Ala380, 386-387, Ser405, Ala423, and Arg440 contribute to the acetyl-CoA site; that span reads NY.

The protein in the N-terminal section; belongs to the N-acetylglucosamine-1-phosphate uridyltransferase family. It in the C-terminal section; belongs to the transferase hexapeptide repeat family. Homotrimer. The cofactor is Mg(2+).

It localises to the cytoplasm. It catalyses the reaction alpha-D-glucosamine 1-phosphate + acetyl-CoA = N-acetyl-alpha-D-glucosamine 1-phosphate + CoA + H(+). The catalysed reaction is N-acetyl-alpha-D-glucosamine 1-phosphate + UTP + H(+) = UDP-N-acetyl-alpha-D-glucosamine + diphosphate. It participates in nucleotide-sugar biosynthesis; UDP-N-acetyl-alpha-D-glucosamine biosynthesis; N-acetyl-alpha-D-glucosamine 1-phosphate from alpha-D-glucosamine 6-phosphate (route II): step 2/2. It functions in the pathway nucleotide-sugar biosynthesis; UDP-N-acetyl-alpha-D-glucosamine biosynthesis; UDP-N-acetyl-alpha-D-glucosamine from N-acetyl-alpha-D-glucosamine 1-phosphate: step 1/1. The protein operates within bacterial outer membrane biogenesis; LPS lipid A biosynthesis. Its function is as follows. Catalyzes the last two sequential reactions in the de novo biosynthetic pathway for UDP-N-acetylglucosamine (UDP-GlcNAc). The C-terminal domain catalyzes the transfer of acetyl group from acetyl coenzyme A to glucosamine-1-phosphate (GlcN-1-P) to produce N-acetylglucosamine-1-phosphate (GlcNAc-1-P), which is converted into UDP-GlcNAc by the transfer of uridine 5-monophosphate (from uridine 5-triphosphate), a reaction catalyzed by the N-terminal domain. The chain is Bifunctional protein GlmU from Salmonella arizonae (strain ATCC BAA-731 / CDC346-86 / RSK2980).